The following is a 251-amino-acid chain: tRNA pseudouridine synthase A (251 aa).

Residue Asp-54 is the Nucleophile of the active site. Tyr-111 is a binding site for substrate.

Belongs to the tRNA pseudouridine synthase TruA family. Homodimer.

It catalyses the reaction uridine(38/39/40) in tRNA = pseudouridine(38/39/40) in tRNA. Its function is as follows. Formation of pseudouridine at positions 38, 39 and 40 in the anticodon stem and loop of transfer RNAs. The protein is tRNA pseudouridine synthase A of Mycoplasma mycoides subsp. mycoides SC (strain CCUG 32753 / NCTC 10114 / PG1).